An 808-amino-acid chain; its full sequence is Phospholipase D alpha 1 (808 aa).

One can recognise a C2 domain in the interval 1 to 125; that stretch reads MSKVLLHGTL…LDGDEVDKWI (125 aa). Position 186 (Asp-186) interacts with Ca(2+). The PLD phosphodiesterase 1 domain maps to 326–364; it reads TMFTHHQKIVVVDHELPRGGSQKRRVMSFVGGIDLCDGR. Residues His-331, Lys-333, and Asp-338 contribute to the active site. Residue His-331 coordinates a 1,2-diacyl-sn-glycero-3-phosphate. Positions 370 and 404 each coordinate Ca(2+). A 1,2-diacyl-sn-glycero-3-phosphate contacts are provided by Gln-520 and His-659. A PLD phosphodiesterase 2 domain is found at 654–681; the sequence is FMIYVHSKMMIVDDEYIIVGSANINQRS. Active-site residues include His-659, Lys-661, and Asp-666. Residue Glu-720 participates in Ca(2+) binding.

Belongs to the phospholipase D family. C2-PLD subfamily. As to quaternary structure, interacts (via C2 domain) with CARDA (via RGD or KGE motifs). Ca(2+) is required as a cofactor.

It carries out the reaction a 1,2-diacyl-sn-glycero-3-phosphocholine + H2O = a 1,2-diacyl-sn-glycero-3-phosphate + choline + H(+). Functionally, hydrolyzes glycerol-phospholipids at the terminal phosphodiesteric bond. Plays an important role in various cellular processes. This Cynara cardunculus (Cardoon) protein is Phospholipase D alpha 1.